Reading from the N-terminus, the 684-residue chain is 1,4-alpha-glucan-branching enzyme (684 aa).

Tryptophan 88 and lysine 123 together coordinate (1,4-alpha-D-glucosyl)n. Catalysis depends on aspartate 340, which acts as the Nucleophile. Glutamate 395 functions as the Proton donor in the catalytic mechanism.

The protein belongs to the glycosyl hydrolase 13 family. GlgB subfamily.

Its subcellular location is the cytoplasm. The enzyme catalyses Transfers a segment of a (1-&gt;4)-alpha-D-glucan chain to a primary hydroxy group in a similar glucan chain.. Its pathway is glycan biosynthesis; glycogen biosynthesis. Glycogen-branching enzyme participates in the glycogen biosynthetic process along with glycogenin and glycogen synthase. Generates alpha-1,6-glucosidic branches from alpha-1,4-linked glucose chains, to increase solubility of the glycogen polymer. This is 1,4-alpha-glucan-branching enzyme (be1) from Emericella nidulans (strain FGSC A4 / ATCC 38163 / CBS 112.46 / NRRL 194 / M139) (Aspergillus nidulans).